The sequence spans 85 residues: Large ribosomal subunit protein bL27 (85 aa).

The segment at 1 to 22 (MAHKKAGGSTRNGRDSESKRLG) is disordered.

This sequence belongs to the bacterial ribosomal protein bL27 family.

In Vibrio parahaemolyticus serotype O3:K6 (strain RIMD 2210633), this protein is Large ribosomal subunit protein bL27.